A 127-amino-acid chain; its full sequence is Large ribosomal subunit protein bL12 (127 aa).

This sequence belongs to the bacterial ribosomal protein bL12 family. As to quaternary structure, homodimer. Part of the ribosomal stalk of the 50S ribosomal subunit. Forms a multimeric L10(L12)X complex, where L10 forms an elongated spine to which 2 to 4 L12 dimers bind in a sequential fashion. Binds GTP-bound translation factors.

Its function is as follows. Forms part of the ribosomal stalk which helps the ribosome interact with GTP-bound translation factors. Is thus essential for accurate translation. The polypeptide is Large ribosomal subunit protein bL12 (Acidiphilium cryptum (strain JF-5)).